A 672-amino-acid polypeptide reads, in one-letter code: Glycine--tRNA ligase beta subunit (672 aa).

This sequence belongs to the class-II aminoacyl-tRNA synthetase family. In terms of assembly, tetramer of two alpha and two beta subunits.

It localises to the cytoplasm. It carries out the reaction tRNA(Gly) + glycine + ATP = glycyl-tRNA(Gly) + AMP + diphosphate. This chain is Glycine--tRNA ligase beta subunit, found in Thermotoga petrophila (strain ATCC BAA-488 / DSM 13995 / JCM 10881 / RKU-1).